The chain runs to 200 residues: Recombination protein RecR (200 aa).

The C4-type zinc finger occupies 57–72; sequence CDSCQNFSDTEICQIC. One can recognise a Toprim domain in the interval 80 to 175; sequence GTLCVVESPS…LITRLAHGIP (96 aa).

This sequence belongs to the RecR family.

May play a role in DNA repair. It seems to be involved in an RecBC-independent recombinational process of DNA repair. It may act with RecF and RecO. This Marinobacter nauticus (strain ATCC 700491 / DSM 11845 / VT8) (Marinobacter aquaeolei) protein is Recombination protein RecR.